We begin with the raw amino-acid sequence, 339 residues long: Methionine synthase (339 aa).

Zn(2+) is bound by residues His212, Cys214, and Cys295.

This sequence belongs to the archaeal MetE family. Requires Zn(2+) as cofactor.

It functions in the pathway amino-acid biosynthesis; L-methionine biosynthesis via de novo pathway. Catalyzes the transfer of a methyl group to L-homocysteine resulting in methionine formation. The physiological methyl donor is unknown. This Sulfolobus acidocaldarius (strain ATCC 33909 / DSM 639 / JCM 8929 / NBRC 15157 / NCIMB 11770) protein is Methionine synthase.